Reading from the N-terminus, the 301-residue chain is GTPase Era (301 aa).

Residues 7 to 175 (YCGFIAIVGR…AGIVRKHLPE (169 aa)) form the Era-type G domain. Positions 15 to 22 (GRPNVGKS) are G1. 15 to 22 (GRPNVGKS) contributes to the GTP binding site. Residues 41–45 (QTTRH) are G2. The segment at 62–65 (DTPG) is G3. GTP is bound by residues 62–66 (DTPGL) and 124–127 (NKVD). Positions 124–127 (NKVD) are G4. A G5 region spans residues 154 to 156 (ISA). The 78-residue stretch at 206–283 (LGAELPYSVT…HLELWVKVKS (78 aa)) folds into the KH type-2 domain.

This sequence belongs to the TRAFAC class TrmE-Era-EngA-EngB-Septin-like GTPase superfamily. Era GTPase family. As to quaternary structure, monomer.

It localises to the cytoplasm. The protein localises to the cell inner membrane. In terms of biological role, an essential GTPase that binds both GDP and GTP, with rapid nucleotide exchange. Plays a role in 16S rRNA processing and 30S ribosomal subunit biogenesis and possibly also in cell cycle regulation and energy metabolism. The polypeptide is GTPase Era (Salmonella agona (strain SL483)).